Reading from the N-terminus, the 503-residue chain is UDP-N-acetylmuramoylalanine--D-glutamate ligase (503 aa).

129-135 (GTNGKTT) contributes to the ATP binding site.

The protein belongs to the MurCDEF family.

It is found in the cytoplasm. It catalyses the reaction UDP-N-acetyl-alpha-D-muramoyl-L-alanine + D-glutamate + ATP = UDP-N-acetyl-alpha-D-muramoyl-L-alanyl-D-glutamate + ADP + phosphate + H(+). It functions in the pathway cell wall biogenesis; peptidoglycan biosynthesis. Functionally, cell wall formation. Catalyzes the addition of glutamate to the nucleotide precursor UDP-N-acetylmuramoyl-L-alanine (UMA). The chain is UDP-N-acetylmuramoylalanine--D-glutamate ligase from Burkholderia cenocepacia (strain HI2424).